Consider the following 410-residue polypeptide: Dihydrolipoyllysine-residue acetyltransferase component of pyruvate dehydrogenase complex (410 aa).

A Lipoyl-binding domain is found at 1-69 (MPDIGTDLVE…TTGSLIAILN (69 aa)). N6-lipoyllysine is present on Lys35. Positions 81 to 100 (SSSYSFKNSKNTSTNSNLGN) are disordered. Positions 113-150 (HATPTVRRLARKFDIKLENITGTGRKGRILKEDVISYK) constitute a Peripheral subunit-binding (PSBD) domain. His383 is an active-site residue.

This sequence belongs to the 2-oxoacid dehydrogenase family. Forms a 24-polypeptide structural core with octahedral symmetry. (R)-lipoate serves as cofactor.

It catalyses the reaction N(6)-[(R)-dihydrolipoyl]-L-lysyl-[protein] + acetyl-CoA = N(6)-[(R)-S(8)-acetyldihydrolipoyl]-L-lysyl-[protein] + CoA. In terms of biological role, the pyruvate dehydrogenase complex catalyzes the overall conversion of pyruvate to acetyl-CoA and CO(2). It contains multiple copies of three enzymatic components: pyruvate dehydrogenase (E1), dihydrolipoamide acetyltransferase (E2) and lipoamide dehydrogenase (E3). The polypeptide is Dihydrolipoyllysine-residue acetyltransferase component of pyruvate dehydrogenase complex (aceF) (Buchnera aphidicola subsp. Baizongia pistaciae (strain Bp)).